The sequence spans 340 residues: Deubiquitinase SseL (340 aa).

Residue H223 is part of the active site. The active-site Nucleophile is the C285.

Belongs to the peptidase C79 family.

The protein localises to the secreted. Its subcellular location is the host cytoplasm. Functionally, effector proteins function to alter host cell physiology and promote bacterial survival in host tissues. This protease targets the host cell ubiquitin pathway by acting as a deubiquitinase in infected host cells. This is Deubiquitinase SseL (sseL) from Salmonella paratyphi B (strain ATCC BAA-1250 / SPB7).